A 703-amino-acid polypeptide reads, in one-letter code: Elongation factor G 1 (703 aa).

Residues Glu8–Val291 form the tr-type G domain. GTP contacts are provided by residues Ala17 to Thr24, Asp88 to His92, and Asn142 to Asp145.

The protein belongs to the TRAFAC class translation factor GTPase superfamily. Classic translation factor GTPase family. EF-G/EF-2 subfamily.

The protein localises to the cytoplasm. Functionally, catalyzes the GTP-dependent ribosomal translocation step during translation elongation. During this step, the ribosome changes from the pre-translocational (PRE) to the post-translocational (POST) state as the newly formed A-site-bound peptidyl-tRNA and P-site-bound deacylated tRNA move to the P and E sites, respectively. Catalyzes the coordinated movement of the two tRNA molecules, the mRNA and conformational changes in the ribosome. The protein is Elongation factor G 1 of Burkholderia orbicola (strain AU 1054).